Reading from the N-terminus, the 167-residue chain is Multifunctional Ser/Thr-tRNA deacylase ProXp-y (167 aa).

It is found in the cytoplasm. It catalyses the reaction L-seryl-tRNA(Lys) + H2O = tRNA(Lys) + L-serine. The catalysed reaction is L-threonyl-tRNA(Lys) + H2O = tRNA(Lys) + L-threonine. The enzyme catalyses L-homoseryl-tRNA(Lys) + H2O = tRNA(Lys) + L-homoserine + H(+). It carries out the reaction L-seryl-tRNA(Ala) + H2O = tRNA(Ala) + L-serine. It catalyses the reaction L-homoseryl-tRNA(Ser) + H2O = tRNA(Ser) + L-homoserine + H(+). The catalysed reaction is L-seryl-tRNA(Thr) + H2O = tRNA(Thr) + L-serine. The enzyme catalyses L-threonyl-tRNA(Ile) + H2O = tRNA(Ile) + L-threonine. It carries out the reaction L-threonyl-tRNA(Val) + H2O = tRNA(Val) + L-threonine. It catalyses the reaction L-threonyl-tRNA(Ser) + H2O = tRNA(Ser) + L-threonine. Its function is as follows. An aminoacyl-tRNA editing enzyme that deacylates Ser-tRNA and/or Thr-tRNA mischarged by lysyl-tRNA synthetase (LysRS), threonyl-tRNA synthetase (ThrRS), seryl-tRNA synthetase (SerRS), alanyl-tRNA synthetase (AlaRS), valyl-tRNA synthetase (ValRS) and isoleucyl-tRNA synthetase (IleRS) in vitro. Also deacylates mischarged Hse-tRNA(Lys) and Hse-tRNA(Ser), and cognate Ser-tRNA(Ser) and Thr-tRNA(Thr) in vitro. The presence of cognate ThrRS abolishes the Thr-tRNA(Thr) deacylase activity, hence this activity is not applicable physiologically. Not able to remove the amino acid moiety from cognate Val-tRNA(Val), Ile-tRNA(Ile), Lys-tRNA(Lys), Ala-tRNA(Ala) or Pro-tRNA(Pro), or from incorrectly charged Ala-tRNA(Pro), Cys-tRNA(Pro) or Leu-tRNA(Pro) in vitro. May be required in vivo to prevent mistranslation and to maintain growth when the error prone stress-inducible lysyl-tRNA synthetase (LysU) is expressed under environmental pressure. The sequence is that of Multifunctional Ser/Thr-tRNA deacylase ProXp-y from Escherichia coli O157:H7.